Here is a 179-residue protein sequence, read N- to C-terminus: MEQYRGTTILSVRRGNKVVIGGDGQVSLGNTIMKGNACKVRRLYKNQVIAGFAGGTADAFTLFERFEAKLEAHDGQLVRAAVELAKDWRTDRALRRLEALLAVANKDASLIVTGNGDVIQPENDLIAIGSGGAFAQSAARALLENTELEARDIVEKSLGIAGDVCVYTNHHFTIEELSF.

The active site involves T7. Residues G162, C165, and T168 each coordinate Na(+).

This sequence belongs to the peptidase T1B family. HslV subfamily. As to quaternary structure, a double ring-shaped homohexamer of HslV is capped on each side by a ring-shaped HslU homohexamer. The assembly of the HslU/HslV complex is dependent on binding of ATP.

Its subcellular location is the cytoplasm. It carries out the reaction ATP-dependent cleavage of peptide bonds with broad specificity.. Allosterically activated by HslU binding. Protease subunit of a proteasome-like degradation complex believed to be a general protein degrading machinery. The chain is ATP-dependent protease subunit HslV from Saccharophagus degradans (strain 2-40 / ATCC 43961 / DSM 17024).